The primary structure comprises 140 residues: MHRVTITLDDDLMERLDAIIAVRGYQNRSEAIRDLARIGIQQTSAHDSGERCVGAMVYTYDHSKRDLPRKLTQSFHNHHDLSRATMHVHLDHDQCLEVTILDGKASELQHFADHIFSERGVRYGRLVTIPTMDDEQHTHD.

Ni(2+) is bound by residues H76, H87, H89, and C95.

This sequence belongs to the transcriptional regulatory CopG/NikR family. Ni(2+) is required as a cofactor.

Its function is as follows. Transcriptional regulator. This chain is Putative nickel-responsive regulator, found in Rhodopseudomonas palustris (strain BisB5).